The sequence spans 212 residues: Endonuclease III (212 aa).

The HhH domain occupies 108–127; it reads FKELVKLPGVGRKTANVVLN. Residues Cys-187, Cys-194, Cys-197, and Cys-203 each coordinate [4Fe-4S] cluster.

It belongs to the Nth/MutY family. It depends on [4Fe-4S] cluster as a cofactor.

It catalyses the reaction 2'-deoxyribonucleotide-(2'-deoxyribose 5'-phosphate)-2'-deoxyribonucleotide-DNA = a 3'-end 2'-deoxyribonucleotide-(2,3-dehydro-2,3-deoxyribose 5'-phosphate)-DNA + a 5'-end 5'-phospho-2'-deoxyribonucleoside-DNA + H(+). In terms of biological role, DNA repair enzyme that has both DNA N-glycosylase activity and AP-lyase activity. The DNA N-glycosylase activity releases various damaged pyrimidines from DNA by cleaving the N-glycosidic bond, leaving an AP (apurinic/apyrimidinic) site. The AP-lyase activity cleaves the phosphodiester bond 3' to the AP site by a beta-elimination, leaving a 3'-terminal unsaturated sugar and a product with a terminal 5'-phosphate. The chain is Endonuclease III from Rickettsia prowazekii (strain Madrid E).